Here is a 68-residue protein sequence, read N- to C-terminus: Conotoxin Mr3.3 (68 aa).

The signal sequence occupies residues 1 to 19 (MSRLGVLLTICLLLFPLTA). Residues 20-51 (VPLDGDQPADRPAERLQDDISSEHHPHFDSGR) constitute a propeptide that is removed on maturation. Residues 22–46 (LDGDQPADRPAERLQDDISSEHHPH) form a disordered region. The segment covering 27 to 46 (PADRPAERLQDDISSEHHPH) has biased composition (basic and acidic residues). Disulfide bonds link cysteine 53-cysteine 67, cysteine 54-cysteine 63, and cysteine 59-cysteine 66. Position 65 is a 4-hydroxyproline (proline 65).

The protein belongs to the conotoxin M superfamily. In terms of tissue distribution, expressed by the venom duct.

It localises to the secreted. In Conus marmoreus (Marble cone), this protein is Conotoxin Mr3.3.